The primary structure comprises 79 residues: Small ribosomal subunit protein uS17 (79 aa).

It belongs to the universal ribosomal protein uS17 family. Part of the 30S ribosomal subunit.

Functionally, one of the primary rRNA binding proteins, it binds specifically to the 5'-end of 16S ribosomal RNA. The chain is Small ribosomal subunit protein uS17 from Paramagnetospirillum magneticum (strain ATCC 700264 / AMB-1) (Magnetospirillum magneticum).